A 397-amino-acid chain; its full sequence is Elongation factor Tu (397 aa).

Residues 10 to 207 (KPHVNIGTIG…ACDSYIEEPE (198 aa)) form the tr-type G domain. The interval 19 to 26 (GHIDHGKT) is G1. 19–26 (GHIDHGKT) lines the GTP pocket. Position 26 (threonine 26) interacts with Mg(2+). The tract at residues 60–64 (GITIA) is G2. Residues 81–84 (DCPG) are G3. Residues 81 to 85 (DCPGH) and 136 to 139 (NKCD) each bind GTP. The G4 stretch occupies residues 136-139 (NKCD). Residues 174-176 (SAL) form a G5 region.

The protein belongs to the TRAFAC class translation factor GTPase superfamily. Classic translation factor GTPase family. EF-Tu/EF-1A subfamily. As to quaternary structure, monomer.

It is found in the cytoplasm. The enzyme catalyses GTP + H2O = GDP + phosphate + H(+). GTP hydrolase that promotes the GTP-dependent binding of aminoacyl-tRNA to the A-site of ribosomes during protein biosynthesis. The protein is Elongation factor Tu of Maridesulfovibrio salexigens (strain ATCC 14822 / DSM 2638 / NCIMB 8403 / VKM B-1763) (Desulfovibrio salexigens).